The sequence spans 126 residues: Small ribosomal subunit protein eS8 (126 aa).

Residues 1 to 10 (MAIWQGSSLR) are compositionally biased toward polar residues. The disordered stretch occupies residues 1–35 (MAIWQGSSLRKPSGARSRRNKNKRNAEFGRNPAET).

This sequence belongs to the eukaryotic ribosomal protein eS8 family. Part of the 30S ribosomal subunit.

In Methanosphaera stadtmanae (strain ATCC 43021 / DSM 3091 / JCM 11832 / MCB-3), this protein is Small ribosomal subunit protein eS8.